An 81-amino-acid chain; its full sequence is MAVKIRLRRMGQKKAPFYRIVVADSRSPRDGRCIEEIGTYDPTKDPSEYHVNEELAKKWLSNGAQPTETVARIFKSAGIEK.

Belongs to the bacterial ribosomal protein bS16 family.

This Agathobacter rectalis (strain ATCC 33656 / DSM 3377 / JCM 17463 / KCTC 5835 / VPI 0990) (Eubacterium rectale) protein is Small ribosomal subunit protein bS16.